The following is a 292-amino-acid chain: Acetylglutamate kinase (292 aa).

Substrate-binding positions include 72–73, Arg-94, and Asn-187; that span reads GG.

The protein belongs to the acetylglutamate kinase family. ArgB subfamily.

The protein localises to the cytoplasm. It carries out the reaction N-acetyl-L-glutamate + ATP = N-acetyl-L-glutamyl 5-phosphate + ADP. Its pathway is amino-acid biosynthesis; L-arginine biosynthesis; N(2)-acetyl-L-ornithine from L-glutamate: step 2/4. In terms of biological role, catalyzes the ATP-dependent phosphorylation of N-acetyl-L-glutamate. In Trichodesmium erythraeum (strain IMS101), this protein is Acetylglutamate kinase.